The primary structure comprises 122 residues: Large ribosomal subunit protein eL18 (122 aa).

Belongs to the eukaryotic ribosomal protein eL18 family.

In Picrophilus torridus (strain ATCC 700027 / DSM 9790 / JCM 10055 / NBRC 100828 / KAW 2/3), this protein is Large ribosomal subunit protein eL18.